We begin with the raw amino-acid sequence, 83 residues long: Mu-theraphotoxin-Hhn2i (83 aa).

An N-terminal signal peptide occupies residues 1-21 (MKASMFLALAGLVLLFVVGYA). A propeptide spanning residues 22–48 (SESEEKEFPRELLSKIFAVDDFKGEER) is cleaved from the precursor. Cystine bridges form between C50/C65, C57/C70, and C64/C77. Residue L81 is modified to Leucine amide.

Belongs to the neurotoxin 10 (Hwtx-1) family. 15 (Hntx-3) subfamily. Monomer. As to expression, expressed by the venom gland.

The protein localises to the secreted. Its function is as follows. Lethal neurotoxin. Selectively blocks tetrodotoxin-sensitive voltage-gated sodium channels (Nav). Does not affect tetrodotoxin-resistant voltage-gated sodium channels or calcium channels. This chain is Mu-theraphotoxin-Hhn2i, found in Cyriopagopus hainanus (Chinese bird spider).